Reading from the N-terminus, the 210-residue chain is ATP-dependent Clp protease proteolytic subunit (210 aa).

Catalysis depends on serine 107, which acts as the Nucleophile. The active site involves histidine 132.

Belongs to the peptidase S14 family. Fourteen ClpP subunits assemble into 2 heptameric rings which stack back to back to give a disk-like structure with a central cavity, resembling the structure of eukaryotic proteasomes.

The protein resides in the cytoplasm. The enzyme catalyses Hydrolysis of proteins to small peptides in the presence of ATP and magnesium. alpha-casein is the usual test substrate. In the absence of ATP, only oligopeptides shorter than five residues are hydrolyzed (such as succinyl-Leu-Tyr-|-NHMec, and Leu-Tyr-Leu-|-Tyr-Trp, in which cleavage of the -Tyr-|-Leu- and -Tyr-|-Trp bonds also occurs).. Cleaves peptides in various proteins in a process that requires ATP hydrolysis. Has a chymotrypsin-like activity. Plays a major role in the degradation of misfolded proteins. This chain is ATP-dependent Clp protease proteolytic subunit, found in Ruegeria sp. (strain TM1040) (Silicibacter sp.).